We begin with the raw amino-acid sequence, 206 residues long: Large ribosomal subunit protein uL4 (206 aa).

The tract at residues 47 to 77 (GTQSTKTRSEVRGGGIKPWRQKGTGRARQGS) is disordered.

Belongs to the universal ribosomal protein uL4 family. As to quaternary structure, part of the 50S ribosomal subunit.

In terms of biological role, one of the primary rRNA binding proteins, this protein initially binds near the 5'-end of the 23S rRNA. It is important during the early stages of 50S assembly. It makes multiple contacts with different domains of the 23S rRNA in the assembled 50S subunit and ribosome. Its function is as follows. Forms part of the polypeptide exit tunnel. The protein is Large ribosomal subunit protein uL4 of Clostridium beijerinckii (strain ATCC 51743 / NCIMB 8052) (Clostridium acetobutylicum).